A 27-amino-acid polypeptide reads, in one-letter code: Defensin-like protein 1 (27 aa).

Gln-1 is modified (pyrrolidone carboxylic acid).

This sequence belongs to the DEFL family. As to quaternary structure, forms oligomers in its native state.

Its function is as follows. Possesses antifungal activity sensitive to inorganic cations. In Brassica campestris (Field mustard), this protein is Defensin-like protein 1.